The primary structure comprises 206 residues: Small ribosomal subunit protein uS4 (206 aa).

A disordered region spans residues Asn-18–Lys-44. An S4 RNA-binding domain is found at Arg-94–Val-157.

This sequence belongs to the universal ribosomal protein uS4 family. In terms of assembly, part of the 30S ribosomal subunit. Contacts protein S5. The interaction surface between S4 and S5 is involved in control of translational fidelity.

One of the primary rRNA binding proteins, it binds directly to 16S rRNA where it nucleates assembly of the body of the 30S subunit. Functionally, with S5 and S12 plays an important role in translational accuracy. This Jannaschia sp. (strain CCS1) protein is Small ribosomal subunit protein uS4.